We begin with the raw amino-acid sequence, 406 residues long: Type IV pilus assembly protein PilC (406 aa).

Transmembrane regions (helical) follow at residues 69–91, 171–191, 211–231, and 377–397; these read IFSR…LAIL, YPVI…TGIV, FLIA…LLAV, and MIIF…LPLF.

This sequence belongs to the GSP F family. As to quaternary structure, homotetramer. Interacts with PilB.

It is found in the cell inner membrane. Its function is as follows. Essential inner membrane component of the type IV pilus (T4P) that plays a role in surface and host cell adhesion, colonization, biofilm maturation, virulence, and twitching, a form of surface-associated motility facilitated by cycles of extension, adhesion, and retraction of T4P fibers. Controls both pilus assembly and disassembly and plays an important role in PilB localization to the complex and ATPase activity. The chain is Type IV pilus assembly protein PilC from Thermus thermophilus (strain ATCC 27634 / DSM 579 / HB8).